The chain runs to 169 residues: Cyclic pyranopterin monophosphate synthase (169 aa).

Residues 83–85 and 121–122 each bind substrate; these read LCH and ME. Asp136 is a catalytic residue.

The protein belongs to the MoaC family. As to quaternary structure, homohexamer; trimer of dimers.

The enzyme catalyses (8S)-3',8-cyclo-7,8-dihydroguanosine 5'-triphosphate = cyclic pyranopterin phosphate + diphosphate. It functions in the pathway cofactor biosynthesis; molybdopterin biosynthesis. Catalyzes the conversion of (8S)-3',8-cyclo-7,8-dihydroguanosine 5'-triphosphate to cyclic pyranopterin monophosphate (cPMP). This is Cyclic pyranopterin monophosphate synthase from Rhodospirillum centenum (strain ATCC 51521 / SW).